The following is a 210-amino-acid chain: Thymidylate kinase (210 aa).

Residue 9-16 participates in ATP binding; the sequence is GPEGAGKT.

Belongs to the thymidylate kinase family.

It catalyses the reaction dTMP + ATP = dTDP + ADP. Phosphorylation of dTMP to form dTDP in both de novo and salvage pathways of dTTP synthesis. This is Thymidylate kinase from Thermomicrobium roseum (strain ATCC 27502 / DSM 5159 / P-2).